Consider the following 241-residue polypeptide: Carboxy-S-adenosyl-L-methionine synthase (241 aa).

Residues tyrosine 38, 63-65 (GCS), 88-89 (DN), 116-117 (DI), asparagine 131, and arginine 198 each bind S-adenosyl-L-methionine.

Belongs to the class I-like SAM-binding methyltransferase superfamily. Cx-SAM synthase family. Homodimer.

It carries out the reaction prephenate + S-adenosyl-L-methionine = carboxy-S-adenosyl-L-methionine + 3-phenylpyruvate + H2O. In terms of biological role, catalyzes the conversion of S-adenosyl-L-methionine (SAM) to carboxy-S-adenosyl-L-methionine (Cx-SAM). This is Carboxy-S-adenosyl-L-methionine synthase from Pasteurella multocida (strain Pm70).